A 432-amino-acid chain; its full sequence is Glutamyl-tRNA reductase (432 aa).

Substrate is bound by residues 49–52, S101, 106–108, and Q112; these read TCNR and ESQ. Catalysis depends on C50, which acts as the Nucleophile. 181 to 186 is an NADP(+) binding site; sequence GTGETI. Residues 410–432 form a disordered region; it reads KPGYHHPTLQTTIVKTDETDPAS.

It belongs to the glutamyl-tRNA reductase family. In terms of assembly, homodimer.

The enzyme catalyses (S)-4-amino-5-oxopentanoate + tRNA(Glu) + NADP(+) = L-glutamyl-tRNA(Glu) + NADPH + H(+). It participates in porphyrin-containing compound metabolism; protoporphyrin-IX biosynthesis; 5-aminolevulinate from L-glutamyl-tRNA(Glu): step 1/2. Its function is as follows. Catalyzes the NADPH-dependent reduction of glutamyl-tRNA(Glu) to glutamate 1-semialdehyde (GSA). This is Glutamyl-tRNA reductase from Xylella fastidiosa (strain 9a5c).